Reading from the N-terminus, the 644-residue chain is Chaperone protein DnaK (644 aa).

Phosphothreonine; by autocatalysis is present on Thr199. The segment at 589–644 (QALAEASHKLAEKMYSQGQGPQAGPGEEPSGQSGGTEKPVEGEVVDAEFEEVKNKK) is disordered. Low complexity predominate over residues 604–619 (SQGQGPQAGPGEEPSG).

The protein belongs to the heat shock protein 70 family.

Its function is as follows. Acts as a chaperone. This is Chaperone protein DnaK from Nitrosospira multiformis (strain ATCC 25196 / NCIMB 11849 / C 71).